The primary structure comprises 562 residues: Calcium-dependent protein kinase 5 (562 aa).

Residues Glu118–Phe372 form the Protein kinase domain. ATP contacts are provided by residues Leu124–Val132 and Lys147. Asp238 (proton acceptor) is an active-site residue. The J domain autoinhibitory motif signature appears at Lys394–Cys402. The segment at Lys394–Glu429 is j domain. A J domain EF-hand interaction motif motif is present at residues Lys403–Ile412. EF-hand domains follow at residues Lys419 to Asn453, Glu454 to Leu489, Glu490 to Gln525, and Phe528 to Ser562. Residues Asp432, Asn434, Asp436, Glu443, Asp467, Asp469, Asn471, Glu478, Asp503, Asn505, Asp507, Glu514, Asp541, Asn543, Asp545, Tyr547, and Glu552 each coordinate Ca(2+).

It belongs to the protein kinase superfamily. Ser/Thr protein kinase family. CDPK subfamily. The cofactor is Mg(2+). May be palmitoylated. Post-translationally, autophosphorylated in vitro.

Its subcellular location is the cytoplasm. The protein resides in the cytoplasmic vesicle. It is found in the secretory vesicle. The protein localises to the microneme membrane. It localises to the cell membrane. It catalyses the reaction L-seryl-[protein] + ATP = O-phospho-L-seryl-[protein] + ADP + H(+). It carries out the reaction L-threonyl-[protein] + ATP = O-phospho-L-threonyl-[protein] + ADP + H(+). With respect to regulation, activated by calcium. Upon calcium binding to the EF-hand domains, the C-terminus of the junction domain (J domain) undergoes a conformational change which results in the dissociation of the pseudo-substrate inhibitory motif from the catalytic domain. This, in turn, may facilitate the autophosphorylation of the activation loop at Thr-278, which leads to the kinase activation. Its function is as follows. Calcium-dependent protein kinase which acts as a sensor and effector of intracellular Ca(2+) levels probably in part downstream of cGMP-activated PKG kinase. Plays a central role in host erythrocytes and hepatocytes infection cycles. During the liver stage, involved in sporozoite motility and thus in sporozoite invasion of host hepatocytes, probably together with CDPK1 and CDPK4. Involved in merosome egress from host hepatocytes, probably together with CDPK4. Required for the release of hepatic merozoites from merosomes in the host blood stream. During the asexual blood stage, required for merozoite egress from host erythrocytes by triggering microneme secretion. Phosphorylates transporter NPT1 at late schizont stage. The protein is Calcium-dependent protein kinase 5 of Plasmodium berghei (strain Anka).